The sequence spans 359 residues: Fe-S cluster assembly protein DRE2 (359 aa).

The interval 1-159 is N-terminal SAM-like domain; the sequence is MANILLLLHP…LFKKLSSNSN (159 aa). The interval 152–187 is disordered; it reads KKLSSNSNNNNNSSSPIGLTDSSAANTDEETDEANV. The segment covering 155–166 has biased composition (low complexity); it reads SSNSNNNNNSSS. Residues 159 to 228 form a linker region; it reads NNNNNSSSPI…DDLIKDSNQL (70 aa). Positions 167-177 are enriched in polar residues; the sequence is PIGLTDSSAAN. Residues Cys-240, Cys-252, Cys-255, and Cys-257 each coordinate [2Fe-2S] cluster. A fe-S binding site A region spans residues 240-257; the sequence is CEIPNGKKRRKACKDCTC. Residues Cys-322, Cys-325, Cys-333, and Cys-336 each coordinate [4Fe-4S] cluster. Short sequence motifs (cx2C motif) lie at residues 322–325 and 333–336; these read CGSC and CDGC. Residues 322 to 336 form a fe-S binding site B region; sequence CGSCALGDAFRCDGC.

This sequence belongs to the anamorsin family. Monomer. Interacts with TAH18. Interacts with MIA40. The cofactor is [2Fe-2S] cluster. It depends on [4Fe-4S] cluster as a cofactor.

The protein localises to the cytoplasm. The protein resides in the mitochondrion intermembrane space. Component of the cytosolic iron-sulfur (Fe-S) protein assembly (CIA) machinery required for the maturation of extramitochondrial Fe-S proteins. Part of an electron transfer chain functioning in an early step of cytosolic Fe-S biogenesis, facilitating the de novo assembly of a [4Fe-4S] cluster on the scaffold complex CFD1-NBP35. Electrons are transferred to DRE2 from NADPH via the FAD- and FMN-containing protein TAH18. TAH18-DRE2 are also required for the assembly of the diferric tyrosyl radical cofactor of ribonucleotide reductase (RNR), probably by providing electrons for reduction during radical cofactor maturation in the catalytic small subunit RNR2. The polypeptide is Fe-S cluster assembly protein DRE2 (Scheffersomyces stipitis (strain ATCC 58785 / CBS 6054 / NBRC 10063 / NRRL Y-11545) (Yeast)).